A 179-amino-acid polypeptide reads, in one-letter code: Fucolectin-4 (179 aa).

The N-terminal stretch at 1–23 is a signal peptide; that stretch reads MEVKTIMLLFQILAISTLKQGSA. The segment at 31–179 is F5/8 type C-like; sequence EENVALRGRA…VEVNALLPVN (149 aa). Positions 58, 61, 63, and 72 each coordinate Ca(2+). Disulfide bonds link Cys-73-Cys-168, Cys-104-Cys-105, and Cys-130-Cys-146. Residues His-75 and Arg-101 each coordinate alpha-L-fucose. The Cell attachment site signature appears at 101 to 103; sequence RGD. Arg-108 serves as a coordination point for alpha-L-fucose. Ca(2+) contacts are provided by Cys-168 and Glu-169.

It belongs to the fucolectin family. Homotrimer. In terms of tissue distribution, gill mucous cells.

Its subcellular location is the secreted. Its function is as follows. Acts as a defensive agent. Recognizes blood group fucosylated oligosaccharides including A, B, H and Lewis B-type antigens. Does not recognize Lewis A antigen and has low affinity for monovalent haptens. This is Fucolectin-4 from Anguilla japonica (Japanese eel).